The sequence spans 395 residues: RNA demethylase ALKBH5 (395 aa).

Disordered stretches follow at residues M1–R28 and A47–A83. A2 bears the N-acetylalanine mark. A Glycyl lysine isopeptide (Lys-Gly) (interchain with G-Cter in ubiquitin) cross-link involves residue K58. Residues K60 to A83 show a composition bias toward basic and acidic residues. Residues S65 and S70 each carry the phosphoserine modification. Residues E68–K117 adopt a coiled-coil conformation. Y72 is modified (phosphotyrosine). K87 participates in a covalent cross-link: Glycyl lysine isopeptide (Lys-Gly) (interchain with G-Cter in SUMO1). S88 is subject to Phosphoserine. An N6-acetyllysine modification is found at K133. Y140 is an active-site residue. 3 residues coordinate 2-oxoglutarate: N194, Y196, and H205. A disulfide bridge links C231 with C268. N6-acetyllysine is present on K236. 2 residues coordinate 2-oxoglutarate: H267 and R278. Positions E294 to H395 are disordered. Low complexity predominate over residues K296–S306. K322 participates in a covalent cross-link: Glycyl lysine isopeptide (Lys-Gly) (interchain with G-Cter in SUMO1). Residue S326 is modified to Phosphoserine. K329 participates in a covalent cross-link: Glycyl lysine isopeptide (Lys-Gly) (interchain with G-Cter in SUMO2). Residues K329–R350 show a composition bias toward basic and acidic residues. R360 bears the Omega-N-methylarginine mark. A phosphoserine mark is found at S362, S372, S375, and S385.

It belongs to the alkB family. As to quaternary structure, monomer. Interacts with RBM33; promoting desumoylation by SENP1 and recruitment to N(6)-methyladenosine-containing mRNAs. Interacts (when acetylated by KAT8) with PSPC1; interaction facilitates recognition of N(6)-methyladenosine (m6A) mRNA. Requires Fe(2+) as cofactor. Phosphorylated at Ser-88 and Ser-326 in response to reactive oxygen species (ROS), promoting sumoylation and inactivation. In terms of processing, acetylated by KAT8 at Lys-236, promoting interaction with PSPC1, thereby facilitating recognition of N(6)-methyladenosine (m6A) mRNA by ALKBH5. Deacetylated at Lys-236 by HDAC7. Post-translationally, sumoylated at Lys-87 and Lys-322 by PIAS4 following phosphorylation at Ser-88 and Ser-326 in response to reactive oxygen species (ROS), inhibiting the RNA demethylase activity. Desumoylated by SENP1; relieving RNA demethylase inhibition, leading to N(6)-methyladenosine-containing mRNAs demethylation. Ubiquitinated at Lys-58 via 'Lys-48'-linked polyubiquitin chain, leading to its degradation by the proteasome. Deubiquitinated at Lys-58 by USP9X, promoting its stabilizazion. As to expression, widely expressed, with highest expression in testis. In testis, present in almost all testicular cell types except elongating and elongated spermatids (at protein level). Among spermatogenic cells, present at high level in spermatocytes; medium levels in spermatogonia and lower levels in round spermatids (at protein level).

It is found in the nucleus speckle. It catalyses the reaction an N(6)-methyladenosine in mRNA + 2-oxoglutarate + O2 = an adenosine in mRNA + formaldehyde + succinate + CO2. With respect to regulation, RNA demethylase activity is inhibited following sumoylation. Inhibition is relieved following desumoylation. Inhibited by histone demethylase inhibitor IOX1. Functionally, dioxygenase that specifically demethylates N(6)-methyladenosine (m6A) RNA, the most prevalent internal modification of messenger RNA (mRNA) in higher eukaryotes. Demethylates RNA by oxidative demethylation, which requires molecular oxygen, alpha-ketoglutarate and iron. Demethylation of m6A mRNA affects mRNA processing, translation and export. Can also demethylate N(6)-methyladenosine in single-stranded DNA (in vitro). Required for the late meiotic and haploid phases of spermatogenesis by mediating m6A demethylation in spermatocytes and round spermatids: m6A demethylation of target transcripts is required for correct splicing and the production of longer 3'-UTR mRNAs in male germ cells. Involved in paraspeckle assembly, a nuclear membraneless organelle, by undergoing liquid-liquid phase separation. Paraspeckle assembly is coupled with m6A demethylation of RNAs, such as NEAT1 non-coding RNA. Also acts as a negative regulator of T-cell development: inhibits gamma-delta T-cell proliferation via demethylation of JAG1 and NOTCH2 transcripts. Inhibits regulatory T-cell (Treg) recruitment by mediating demethylation and destabilization of CCL28 mRNAs. This chain is RNA demethylase ALKBH5, found in Mus musculus (Mouse).